A 427-amino-acid chain; its full sequence is Serine--tRNA ligase (427 aa).

231–233 (TAE) contacts L-serine. 262–264 (RSE) serves as a coordination point for ATP. Position 285 (Glu-285) interacts with L-serine. 349–352 (EISS) contacts ATP. Ser-385 is a binding site for L-serine.

It belongs to the class-II aminoacyl-tRNA synthetase family. Type-1 seryl-tRNA synthetase subfamily. In terms of assembly, homodimer. The tRNA molecule binds across the dimer.

The protein localises to the cytoplasm. It carries out the reaction tRNA(Ser) + L-serine + ATP = L-seryl-tRNA(Ser) + AMP + diphosphate + H(+). It catalyses the reaction tRNA(Sec) + L-serine + ATP = L-seryl-tRNA(Sec) + AMP + diphosphate + H(+). The protein operates within aminoacyl-tRNA biosynthesis; selenocysteinyl-tRNA(Sec) biosynthesis; L-seryl-tRNA(Sec) from L-serine and tRNA(Sec): step 1/1. Catalyzes the attachment of serine to tRNA(Ser). Is also able to aminoacylate tRNA(Sec) with serine, to form the misacylated tRNA L-seryl-tRNA(Sec), which will be further converted into selenocysteinyl-tRNA(Sec). The protein is Serine--tRNA ligase of Brucella melitensis biotype 2 (strain ATCC 23457).